We begin with the raw amino-acid sequence, 158 residues long: Phosphopantetheine adenylyltransferase (158 aa).

Thr9 contributes to the substrate binding site. Residues 9-10 (TF) and His17 contribute to the ATP site. Substrate contacts are provided by Lys41, Leu73, and Arg87. ATP contacts are provided by residues 88–90 (GVR), Glu98, and 123–129 (WSYVSST).

This sequence belongs to the bacterial CoaD family. As to quaternary structure, homohexamer. Mg(2+) serves as cofactor.

Its subcellular location is the cytoplasm. It catalyses the reaction (R)-4'-phosphopantetheine + ATP + H(+) = 3'-dephospho-CoA + diphosphate. Its pathway is cofactor biosynthesis; coenzyme A biosynthesis; CoA from (R)-pantothenate: step 4/5. Reversibly transfers an adenylyl group from ATP to 4'-phosphopantetheine, yielding dephospho-CoA (dPCoA) and pyrophosphate. This chain is Phosphopantetheine adenylyltransferase, found in Pasteurella multocida (strain Pm70).